Reading from the N-terminus, the 170-residue chain is Siroheme decarboxylase NirL subunit (170 aa).

The protein belongs to the Ahb/Nir family. Probably forms a complex composed of NirD, NirL, NirG and NirH. All proteins are required for the total conversion of siroheme to didecarboxysiroheme.

It catalyses the reaction siroheme + 2 H(+) = 12,18-didecarboxysiroheme + 2 CO2. The protein operates within porphyrin-containing compound metabolism. Involved in heme d1 biosynthesis. Catalyzes the decarboxylation of siroheme into didecarboxysiroheme. In Stutzerimonas stutzeri (Pseudomonas stutzeri), this protein is Siroheme decarboxylase NirL subunit.